A 274-amino-acid chain; its full sequence is Thiamine kinase (274 aa).

The protein belongs to the thiamine kinase family.

It catalyses the reaction thiamine + ATP = thiamine phosphate + ADP + H(+). It participates in cofactor biosynthesis; thiamine diphosphate biosynthesis; thiamine phosphate from thiamine: step 1/1. In terms of biological role, catalyzes the ATP-dependent phosphorylation of thiamine to thiamine phosphate. Is involved in thiamine salvage. This chain is Thiamine kinase, found in Shigella flexneri serotype 5b (strain 8401).